The following is a 647-amino-acid chain: Auxin efflux carrier component 2 (647 aa).

Residues Met1–Met7 lie on the Extracellular side of the membrane. The helical transmembrane segment at Tyr8–Val28 threads the bilayer. At Arg29 to Gln38 the chain is on the cytoplasmic side. The helical transmembrane segment at Cys39–Ile59 threads the bilayer. A (indol-3-yl)acetate-binding site is contributed by Val51. The Extracellular portion of the chain corresponds to Ser60–Asn68. A helical transmembrane segment spans residues Tyr69 to Trp89. Over Gln90 to Trp100 the chain is Cytoplasmic. Residues Met101 to Leu121 traverse the membrane as a helical segment. Residues Asn112 and Leu114 each contribute to the (indol-3-yl)acetate site. At Arg122 to Asn131 the chain is on the extracellular side. A helical transmembrane segment spans residues Leu132–Phe152. (indol-3-yl)acetate is bound at residue Tyr145. At Glu153 to Ser507 the chain is on the cytoplasmic side. Residues Ser237, Ser258, and Ser310 each carry the phosphoserine modification. The segment at Ser339 to Asn380 is disordered. Position 354 is a phosphothreonine (Thr354). The segment covering Gly366–Gly378 has biased composition (gly residues). Ser393 is modified (phosphoserine). Disordered regions lie at residues Glu397–Ile420 and Pro440–Pro481. Residues Leu508–Met528 form a helical membrane-spanning segment. Over Ser529–Ser531 the chain is Extracellular. A helical transmembrane segment spans residues Ile532–Ala552. Residues Leu553 to Ala568 are Cytoplasmic-facing. Residues Met569–Ile589 form a helical membrane-spanning segment. Over Arg590–Asp592 the chain is Extracellular. A helical transmembrane segment spans residues Leu593 to Ala613. (indol-3-yl)acetate contacts are provided by Ile607 and Val608. The Cytoplasmic portion of the chain corresponds to Lys614–Ala626. A helical membrane pass occupies residues Val627 to Leu647.

This sequence belongs to the auxin efflux carrier (TC 2.A.69.1) family. Homodimer. Interacts with FYPP1 and FYPP3. Component of a complex made of PINs (e.g. PIN1 and PIN2), MAB4/MELs (e.g. NPY1/MAB4 and NPY5/MEL1) and AGC kinases (e.g. D6PK and PID) at the plasma membrane. Binds directly to NPY1/MAB4, NPY5/MEL1 and PID. In terms of tissue distribution, root-specific. Localized to the cortex, epidermis and lateral root cap, predominantly at the upper side of cells.

It is found in the cell membrane. Acts as a component of the auxin efflux carrier. Seems to be involved in the root-specific auxin transport, and mediates the root gravitropism. Its particular localization suggests a role in the translocation of auxin towards the elongation zone. Recrutes NPY proteins (e.g. NPY1/MAB4 and NPY5/MEL1) to the plasma membrane in a polar basal localization in root epidermis; this activity is optimized by AGC kinases-mediated (e.g. D6PK and PID) phosphorylation that limits their lateral diffusion-based escape. The sequence is that of Auxin efflux carrier component 2 from Arabidopsis thaliana (Mouse-ear cress).